The sequence spans 266 residues: Thiazole synthase (266 aa).

Residue Lys-95 is the Schiff-base intermediate with DXP of the active site. 1-deoxy-D-xylulose 5-phosphate contacts are provided by residues Gly-156, 182–183 (AG), and 204–205 (NT).

The protein belongs to the ThiG family. Homotetramer. Forms heterodimers with either ThiH or ThiS.

It localises to the cytoplasm. The catalysed reaction is [ThiS sulfur-carrier protein]-C-terminal-Gly-aminoethanethioate + 2-iminoacetate + 1-deoxy-D-xylulose 5-phosphate = [ThiS sulfur-carrier protein]-C-terminal Gly-Gly + 2-[(2R,5Z)-2-carboxy-4-methylthiazol-5(2H)-ylidene]ethyl phosphate + 2 H2O + H(+). Its pathway is cofactor biosynthesis; thiamine diphosphate biosynthesis. Functionally, catalyzes the rearrangement of 1-deoxy-D-xylulose 5-phosphate (DXP) to produce the thiazole phosphate moiety of thiamine. Sulfur is provided by the thiocarboxylate moiety of the carrier protein ThiS. In vitro, sulfur can be provided by H(2)S. The protein is Thiazole synthase of Shewanella denitrificans (strain OS217 / ATCC BAA-1090 / DSM 15013).